The chain runs to 395 residues: uncharacterized protein (395 aa).

Disordered regions lie at residues 185 to 282 (RREV…SSTA) and 316 to 372 (GSST…TCSS). Over residues 248–257 (LHLRTRHPHR) the composition is skewed to basic residues. Residues 342 to 360 (ARASTHSRSSPSASANSRY) show a composition bias toward low complexity.

This is an uncharacterized protein from Streptomyces fradiae (Streptomyces roseoflavus).